The sequence spans 122 residues: Guanine nucleotide exchange factor MSS4 homolog (122 aa).

The 112-residue stretch at 9 to 120 (EQITDGKNKS…YLALKRVVHK (112 aa)) folds into the MSS4 domain. Zn(2+) contacts are provided by Cys22, Cys25, Cys92, and Cys95.

This sequence belongs to the DSS4/MSS4 family. Interacts with Rab8.

It localises to the basal cell membrane. In terms of biological role, guanine-nucleotide-releasing protein that acts on members of the sec4/ypt1/rab subfamily such as Rab8. During egg development, essential for establishing and maintaining epithelial cell polarity by regulating the correct polarized deposition of basal membrane (BM) proteins such as trol/Pcan and vkg/Coll IV to the basal surface of follicular epithelial (FE) cells. Likely to function by restricting the activity of the vesicle transport regulator Rab8 to the basal membrane, and thus directs BM protein-containing vesicles to the basal side of the FE cells. This function is independent of the Crag/Rab10 regulation of polarized BM protein secretion in the FE. The chain is Guanine nucleotide exchange factor MSS4 homolog from Drosophila melanogaster (Fruit fly).